Consider the following 1007-residue polypeptide: uncharacterized protein (1007 aa).

A signal peptide spans 1–51 (MTTPISNSPSSIPTVTVSTTTASSGSLGTSTVSSTTTSTSVAQTATTTSSA). The segment covering 1–96 (MTTPISNSPS…SATANKTSSA (96 aa)) has biased composition (low complexity). 7 disordered regions span residues 1 to 186 (MTTP…GNPI), 200 to 224 (TYTTSPRNENIFSPGPEGLPNMSLP), 387 to 533 (NWGS…GPDI), 543 to 562 (TVYPGENGGSTEGPLPANQN), 578 to 645 (ETII…GPDI), 655 to 674 (TVYPGENGGSTEGPLPANQN), and 712 to 757 (DLED…GPDI). Residues 118–163 (DGEVSSNYDDVDTPTNSSDSTVDSDYQDVETQYKTISNNGENTYET) show a composition bias toward polar residues. Residues 167–176 (HGEKNTHVQE) show a composition bias toward basic and acidic residues. 2 stretches are compositionally biased toward polar residues: residues 177-186 (SHASGTGNPI) and 200-210 (TYTTSPRNENI). Low complexity predominate over residues 423-442 (VINVNVNVGGTNVNIGDTNV). Residues 443–453 (SKGSGTPTSSQ) are compositionally biased toward polar residues. Residues 469-491 (IDTNNQTNGDINTNDNSNNVDGS) are compositionally biased toward low complexity. Polar residues predominate over residues 507–523 (DTESTNGNDSGKTTSTE). A compositionally biased stretch (acidic residues) spans 597 to 618 (ADADVEDTSDTDSGIGDDDGVS). The segment covering 619-635 (DTESTNGNNSGKTTSTE) has biased composition (low complexity). Positions 712–730 (DLEDVSDADSGFGDDDGIS) are enriched in acidic residues. The segment covering 732–743 (TESTNGNDSGKN) has biased composition (polar residues).

This sequence belongs to the chlamydial CPn_0572/CT_456/TC_0741 family.

This is an uncharacterized protein from Chlamydia muridarum (strain MoPn / Nigg).